The chain runs to 227 residues: Cytochrome c oxidase subunit 2 (227 aa).

The Mitochondrial intermembrane portion of the chain corresponds to Met-1–Ser-14. The chain crosses the membrane as a helical span at residues Pro-15 to Met-45. At Leu-46 to Gln-59 the chain is on the mitochondrial matrix side. Residues Glu-60 to Met-87 traverse the membrane as a helical segment. Residues Asp-88–Ile-227 lie on the Mitochondrial intermembrane side of the membrane. Cu cation is bound by residues His-161, Cys-196, Glu-198, Cys-200, His-204, and Met-207. Residue Glu-198 coordinates Mg(2+). Phosphotyrosine is present on Tyr-218.

The protein belongs to the cytochrome c oxidase subunit 2 family. As to quaternary structure, component of the cytochrome c oxidase (complex IV, CIV), a multisubunit enzyme composed of 14 subunits. The complex is composed of a catalytic core of 3 subunits MT-CO1, MT-CO2 and MT-CO3, encoded in the mitochondrial DNA, and 11 supernumerary subunits COX4I, COX5A, COX5B, COX6A, COX6B, COX6C, COX7A, COX7B, COX7C, COX8 and NDUFA4, which are encoded in the nuclear genome. The complex exists as a monomer or a dimer and forms supercomplexes (SCs) in the inner mitochondrial membrane with NADH-ubiquinone oxidoreductase (complex I, CI) and ubiquinol-cytochrome c oxidoreductase (cytochrome b-c1 complex, complex III, CIII), resulting in different assemblies (supercomplex SCI(1)III(2)IV(1) and megacomplex MCI(2)III(2)IV(2)). Found in a complex with TMEM177, COA6, COX18, COX20, SCO1 and SCO2. Interacts with TMEM177 in a COX20-dependent manner. Interacts with COX20. Interacts with COX16. Requires Cu cation as cofactor.

The protein resides in the mitochondrion inner membrane. The enzyme catalyses 4 Fe(II)-[cytochrome c] + O2 + 8 H(+)(in) = 4 Fe(III)-[cytochrome c] + 2 H2O + 4 H(+)(out). Functionally, component of the cytochrome c oxidase, the last enzyme in the mitochondrial electron transport chain which drives oxidative phosphorylation. The respiratory chain contains 3 multisubunit complexes succinate dehydrogenase (complex II, CII), ubiquinol-cytochrome c oxidoreductase (cytochrome b-c1 complex, complex III, CIII) and cytochrome c oxidase (complex IV, CIV), that cooperate to transfer electrons derived from NADH and succinate to molecular oxygen, creating an electrochemical gradient over the inner membrane that drives transmembrane transport and the ATP synthase. Cytochrome c oxidase is the component of the respiratory chain that catalyzes the reduction of oxygen to water. Electrons originating from reduced cytochrome c in the intermembrane space (IMS) are transferred via the dinuclear copper A center (CU(A)) of subunit 2 and heme A of subunit 1 to the active site in subunit 1, a binuclear center (BNC) formed by heme A3 and copper B (CU(B)). The BNC reduces molecular oxygen to 2 water molecules using 4 electrons from cytochrome c in the IMS and 4 protons from the mitochondrial matrix. In Oenomys hypoxanthus (Rufous-nosed rat), this protein is Cytochrome c oxidase subunit 2 (MT-CO2).